A 425-amino-acid polypeptide reads, in one-letter code: Serine--tRNA ligase (425 aa).

233–235 (TAE) contacts L-serine. 264–266 (RRE) lines the ATP pocket. E287 contacts L-serine. 351-354 (EISS) serves as a coordination point for ATP. S385 lines the L-serine pocket.

The protein belongs to the class-II aminoacyl-tRNA synthetase family. Type-1 seryl-tRNA synthetase subfamily. In terms of assembly, homodimer. The tRNA molecule binds across the dimer.

The protein resides in the cytoplasm. It catalyses the reaction tRNA(Ser) + L-serine + ATP = L-seryl-tRNA(Ser) + AMP + diphosphate + H(+). It carries out the reaction tRNA(Sec) + L-serine + ATP = L-seryl-tRNA(Sec) + AMP + diphosphate + H(+). It functions in the pathway aminoacyl-tRNA biosynthesis; selenocysteinyl-tRNA(Sec) biosynthesis; L-seryl-tRNA(Sec) from L-serine and tRNA(Sec): step 1/1. Catalyzes the attachment of serine to tRNA(Ser). Is also able to aminoacylate tRNA(Sec) with serine, to form the misacylated tRNA L-seryl-tRNA(Sec), which will be further converted into selenocysteinyl-tRNA(Sec). The protein is Serine--tRNA ligase of Synechococcus sp. (strain CC9605).